A 71-amino-acid polypeptide reads, in one-letter code: Small ribosomal subunit protein bS21 (71 aa).

The protein belongs to the bacterial ribosomal protein bS21 family.

The sequence is that of Small ribosomal subunit protein bS21 from Pseudoalteromonas atlantica (strain T6c / ATCC BAA-1087).